The following is a 320-amino-acid chain: Putative S-adenosyl-L-methionine-dependent methyltransferase MAP_4078 (320 aa).

Residues Asp-132 and Asp-161–Leu-162 contribute to the S-adenosyl-L-methionine site. Residues Pro-294–Arg-320 form a disordered region.

It belongs to the UPF0677 family.

In terms of biological role, exhibits S-adenosyl-L-methionine-dependent methyltransferase activity. The sequence is that of Putative S-adenosyl-L-methionine-dependent methyltransferase MAP_4078 from Mycolicibacterium paratuberculosis (strain ATCC BAA-968 / K-10) (Mycobacterium paratuberculosis).